Here is a 367-residue protein sequence, read N- to C-terminus: Regulator of fusion ref-1 (367 aa).

The span at 1–10 shows a compositional bias: pro residues; the sequence is MVLISTPPPA. The tract at residues 1-24 is disordered; sequence MVLISTPPPAYAHNRKTSQEKKRR. The basic motif 1 stretch occupies residues 11 to 24; the sequence is YAHNRKTSQEKKRR. The bHLH 1 domain occupies 11 to 63; it reads YAHNRKTSQEKKRRDEINAKIKELQLLIQNESDNEKMTQGDVLNRAVEVVSRM. The segment at 25-63 is helix-loop-helix motif 1; that stretch reads DEINAKIKELQLLIQNESDNEKMTQGDVLNRAVEVVSRM. Disordered regions lie at residues 133–177 and 313–367; these read RSES…RRDR and ATSP…RPWE. The span at 141-157 shows a compositional bias: low complexity; the sequence is SSMSYRSQSSSPSTSES. The span at 161–177 shows a compositional bias: basic and acidic residues; it reads IDRKEVKKNREQDRRDR. The tract at residues 162 to 175 is basic motif 2; it reads DRKEVKKNREQDRR. A bHLH 2 domain is found at 162–219; that stretch reads DRKEVKKNREQDRRDRQGEAFDALKNFIIENKLMTSHQVEKMQRLNTLDIIIAYIQNK. Residues 176-219 form a helix-loop-helix motif 2 region; it reads DRQGEAFDALKNFIIENKLMTSHQVEKMQRLNTLDIIIAYIQNK. Low complexity predominate over residues 313–354; sequence ATSPKSQQSPSYSLDSPPPSSDTSSSSIETPSTPNENSNSNP. A compositionally biased stretch (basic residues) spans 356–367; that stretch reads ASRKSKLFRPWE.

In terms of assembly, interacts with unc-37.

Its subcellular location is the nucleus. Its function is as follows. Probable transcription factor. Binds 5'-TGCCACGTGTCCA-3' in vitro, probably via the E-box motif 5'-CA[TC][AG]TG-3'. Acts in embryonic development in a Notch-dependent manner, perhaps as a direct target of transcriptional regulator lag-1 in the Notch signaling pathway. Also acts in embryonic development in a Notch-independent manner. Plays a role in both Notch-dependent and -independent pathways in the execution of neuronal lineage decisions in the embryo. Also involved in regulating cell fate leading to formation of neuronal structures known as postdeirids. Involved in the pattern of cell fusion with a large syncytium known as hyp-7, during larval development, in hermaphrodites. Plays a role in regulating the activity of homeobox protein mab-5 in Pn.p cells. The chain is Regulator of fusion ref-1 from Caenorhabditis elegans.